Here is a 380-residue protein sequence, read N- to C-terminus: Glutamate 5-kinase (380 aa).

ATP is bound at residue Lys15. The substrate site is built by Ser59, Asp146, and Asn158. 178–179 (TD) contacts ATP. In terms of domain architecture, PUA spans 285–363 (RGSVTVDAGA…AEFERLLGYA (79 aa)).

This sequence belongs to the glutamate 5-kinase family.

The protein resides in the cytoplasm. The enzyme catalyses L-glutamate + ATP = L-glutamyl 5-phosphate + ADP. It functions in the pathway amino-acid biosynthesis; L-proline biosynthesis; L-glutamate 5-semialdehyde from L-glutamate: step 1/2. Catalyzes the transfer of a phosphate group to glutamate to form L-glutamate 5-phosphate. The polypeptide is Glutamate 5-kinase (Acidovorax ebreus (strain TPSY) (Diaphorobacter sp. (strain TPSY))).